The primary structure comprises 690 residues: DNA ligase (690 aa).

NAD(+) contacts are provided by residues 36 to 40, 85 to 86, and glutamate 124; these read DSVYD and SL. Lysine 126 serves as the catalytic N6-AMP-lysine intermediate. Arginine 147, glutamate 184, lysine 308, and lysine 332 together coordinate NAD(+). Residues cysteine 426, cysteine 429, cysteine 444, and cysteine 449 each contribute to the Zn(2+) site. Residues 614–690 enclose the BRCT domain; the sequence is NQSNVFDGKS…INENELKLLL (77 aa).

It belongs to the NAD-dependent DNA ligase family. LigA subfamily. The cofactor is Mg(2+). Requires Mn(2+) as cofactor.

It carries out the reaction NAD(+) + (deoxyribonucleotide)n-3'-hydroxyl + 5'-phospho-(deoxyribonucleotide)m = (deoxyribonucleotide)n+m + AMP + beta-nicotinamide D-nucleotide.. Its function is as follows. DNA ligase that catalyzes the formation of phosphodiester linkages between 5'-phosphoryl and 3'-hydroxyl groups in double-stranded DNA using NAD as a coenzyme and as the energy source for the reaction. It is essential for DNA replication and repair of damaged DNA. In Prochlorococcus marinus (strain NATL2A), this protein is DNA ligase.